Here is a 597-residue protein sequence, read N- to C-terminus: Arginine--tRNA ligase (597 aa).

The short motif at 138-148 (ANPTGPMHVGH) is the 'HIGH' region element.

This sequence belongs to the class-I aminoacyl-tRNA synthetase family. In terms of assembly, monomer.

It is found in the cytoplasm. The enzyme catalyses tRNA(Arg) + L-arginine + ATP = L-arginyl-tRNA(Arg) + AMP + diphosphate. In Nitrobacter hamburgensis (strain DSM 10229 / NCIMB 13809 / X14), this protein is Arginine--tRNA ligase.